The sequence spans 359 residues: tRNA N6-adenosine threonylcarbamoyltransferase (359 aa).

Fe cation contacts are provided by His-121 and His-125. Residues 143–147 (LVSGG), Asp-176, Gly-189, and Asn-286 each bind substrate. Asp-311 contacts Fe cation.

It belongs to the KAE1 / TsaD family. Fe(2+) serves as cofactor.

The protein resides in the cytoplasm. It catalyses the reaction L-threonylcarbamoyladenylate + adenosine(37) in tRNA = N(6)-L-threonylcarbamoyladenosine(37) in tRNA + AMP + H(+). Required for the formation of a threonylcarbamoyl group on adenosine at position 37 (t(6)A37) in tRNAs that read codons beginning with adenine. Is involved in the transfer of the threonylcarbamoyl moiety of threonylcarbamoyl-AMP (TC-AMP) to the N6 group of A37, together with TsaE and TsaB. TsaD likely plays a direct catalytic role in this reaction. In Jannaschia sp. (strain CCS1), this protein is tRNA N6-adenosine threonylcarbamoyltransferase.